The following is a 430-amino-acid chain: Adenylosuccinate synthetase (430 aa).

Residues 12–18 and 40–42 each bind GTP; these read GDEGKGK and GHT. The active-site Proton acceptor is the D13. The Mg(2+) site is built by D13 and G40. Residues 13-16, 38-41, T130, R144, Q224, T239, and R303 each bind IMP; these read DEGK and NAGH. The active-site Proton donor is the H41. 299-305 lines the substrate pocket; that stretch reads VNTGRKR. Residues R305, 331–333, and 413–415 contribute to the GTP site; these read KLD and STS.

It belongs to the adenylosuccinate synthetase family. As to quaternary structure, homodimer. Mg(2+) is required as a cofactor.

It is found in the cytoplasm. It catalyses the reaction IMP + L-aspartate + GTP = N(6)-(1,2-dicarboxyethyl)-AMP + GDP + phosphate + 2 H(+). The protein operates within purine metabolism; AMP biosynthesis via de novo pathway; AMP from IMP: step 1/2. Its function is as follows. Plays an important role in the de novo pathway of purine nucleotide biosynthesis. Catalyzes the first committed step in the biosynthesis of AMP from IMP. The polypeptide is Adenylosuccinate synthetase (Rhodopseudomonas palustris (strain BisB18)).